We begin with the raw amino-acid sequence, 141 residues long: Aspartate 1-decarboxylase 1 (141 aa).

The active-site Schiff-base intermediate with substrate; via pyruvic acid is the S25. Residue S25 is modified to Pyruvic acid (Ser). T57 contributes to the substrate binding site. Y58 (proton donor) is an active-site residue. Residue 73-75 (GPA) participates in substrate binding.

This sequence belongs to the PanD family. Heterooctamer of four alpha and four beta subunits. The cofactor is pyruvate. Post-translationally, is synthesized initially as an inactive proenzyme, which is activated by self-cleavage at a specific serine bond to produce a beta-subunit with a hydroxyl group at its C-terminus and an alpha-subunit with a pyruvoyl group at its N-terminus.

The protein localises to the cytoplasm. The enzyme catalyses L-aspartate + H(+) = beta-alanine + CO2. Its pathway is cofactor biosynthesis; (R)-pantothenate biosynthesis; beta-alanine from L-aspartate: step 1/1. Its function is as follows. Catalyzes the pyruvoyl-dependent decarboxylation of aspartate to produce beta-alanine. The chain is Aspartate 1-decarboxylase 1 from Paenarthrobacter aurescens (strain TC1).